The chain runs to 453 residues: Midnolin-A (453 aa).

The Ubiquitin-like domain occupies 20 to 94 (MNLNIQSTTG…LTLLPSVEAG (75 aa)). Disordered regions lie at residues 184-219 (SHLASCTPGPTPPTTLSPTSSTHCNGPHSSPLTTSV), 232-256 (CAEQAPCSTRGTEGTSSSPSSRSRK), 333-376 (RNAK…ENRA), and 390-429 (QKRLRRKARRDSRAPYHWMPTRKSSRTSSNSSTSSGEGSL). A compositionally biased stretch (polar residues) spans 206–219 (HCNGPHSSPLTTSV). Composition is skewed to low complexity over residues 239 to 252 (STRGTEGTSSSPSS) and 338 to 351 (TSPQSTSPQQTTHP). Residues 365 to 376 (SGDRLRQTENRA) show a composition bias toward basic and acidic residues. The segment covering 390 to 399 (QKRLRRKARR) has biased composition (basic residues). Residues 415-428 (RTSSNSSTSSGEGS) are compositionally biased toward low complexity.

Its subcellular location is the nucleus. The protein resides in the cytoplasm. It localises to the cytosol. It is found in the nucleolus. Its function is as follows. Facilitates ubiquitin-independent proteasomal degradation of polycomb protein CBX4. Plays a role in inhibiting the activity of glucokinase GCK and both glucose-induced and basal insulin secretion. This chain is Midnolin-A (midn-a), found in Xenopus laevis (African clawed frog).